The sequence spans 599 residues: MTTPAPLTGLLPLNPEQLARLQAATTDLTPEQLAWVSGYFWGVLNPRSGAVAVTPAPEGKMPGVTLISASQTGNARRVAEALRDDLLAANLNVTLVNAGDYKFKQIASEKLLVIVTSTQGEGEPPEEAVALHKFLFSKKALKLENTAFAVFSLGDTSYEFFCQSGKDFDSKLAELGGERLLDRVDADVEYQAAASEWRARVVDVLKSRAPVAAPSQSVATGAVNDIHTSPYTKDAPLTATLSVNQKITGRNSEKDVRHIEIDLGDSGLRYQPGDALGVWYQNDPALVKELVELLWLKGDEPVTVDGKTLPLAEALEWHFELTVNTANIVENYATLTRSESLLPLVGDKAQLQHYAATTPIVDMVRFSPAQLDAQALIGLLRPLTPRLYSIASAQAEVESEVHITVGVVRYDIEGRARAGGASSFLAGRVEEEGEVRVFIEHNDNFRLPANPQTPVIMIGPGTGIAPFRAFMQQRAADGAEGKNWLFFGNPHFTEDFLYQVEWQRYVKEGVLNRIDLAWSRDQKEKIYVQDKLREQGAELWRWINDGAHIYVCGDARCMAVDVEKALLEVIAEFGAMDIESADEYLSELRVERRYQRDVY.

In terms of domain architecture, Flavodoxin-like spans 64–202 (VTLISASQTG…AASEWRARVV (139 aa)). Residues 70-75 (SQTGNA), 117-120 (STQG), and 153-162 (LGDTSYEFFC) each bind FMN. An FAD-binding FR-type domain is found at 234 to 448 (DAPLTATLSV…IEHNDNFRLP (215 aa)). Residues Thr-322, Ala-356, 386–389 (RLYS), 404–406 (TVG), Tyr-410, and 419–422 (GGAS) contribute to the FAD site. Residues 519–520 (SR), 525–529 (KIYVQ), and Asp-561 contribute to the NADP(+) site. Residue Tyr-599 participates in FAD binding.

Belongs to the NADPH-dependent sulphite reductase flavoprotein subunit CysJ family. It in the N-terminal section; belongs to the flavodoxin family. The protein in the C-terminal section; belongs to the flavoprotein pyridine nucleotide cytochrome reductase family. Alpha(8)-beta(8). The alpha component is a flavoprotein, the beta component is a hemoprotein. It depends on FAD as a cofactor. FMN is required as a cofactor.

The enzyme catalyses hydrogen sulfide + 3 NADP(+) + 3 H2O = sulfite + 3 NADPH + 4 H(+). It participates in sulfur metabolism; hydrogen sulfide biosynthesis; hydrogen sulfide from sulfite (NADPH route): step 1/1. Component of the sulfite reductase complex that catalyzes the 6-electron reduction of sulfite to sulfide. This is one of several activities required for the biosynthesis of L-cysteine from sulfate. The flavoprotein component catalyzes the electron flow from NADPH -&gt; FAD -&gt; FMN to the hemoprotein component. The protein is Sulfite reductase [NADPH] flavoprotein alpha-component of Salmonella paratyphi A (strain ATCC 9150 / SARB42).